A 205-amino-acid polypeptide reads, in one-letter code: Small ribosomal subunit protein uS4 (205 aa).

The segment at 18-45 (NIWGRPKSPVNRREYGPGQHGQRRKGKL) is disordered. One can recognise an S4 RNA-binding domain in the interval 94–157 (RRLDTVVYRA…KQLAFVLEAS (64 aa)).

It belongs to the universal ribosomal protein uS4 family. Part of the 30S ribosomal subunit. Contacts protein S5. The interaction surface between S4 and S5 is involved in control of translational fidelity.

One of the primary rRNA binding proteins, it binds directly to 16S rRNA where it nucleates assembly of the body of the 30S subunit. In terms of biological role, with S5 and S12 plays an important role in translational accuracy. This chain is Small ribosomal subunit protein uS4, found in Rhodopseudomonas palustris (strain BisA53).